A 575-amino-acid polypeptide reads, in one-letter code: MPTTDSARAADIKQPDIKPRSRDVTDGLEKAAARGMLRAVGMGDEDFAKPQIGVASSWNEITPCNLSLDRLAKAVKEGVFAAGGYPLEFGTISVSDGISMGHEGMHFSLVSREVIADSVETVMQAERLDGSVLLAGCDKSLPGMLMAAARLDLASVFLYAGSILPGVAKLSDGSEREVTIIDAFEAVGACARGLMPREDVDAIERAICPGEGACGGMYTANTMASAAEALGMSLPGSAAPPATDRRRDGFARRSGQAVVELLRRGITARDILTKEAFENAIAVVMAFGGSTNAVLHLLAIAHEADVALSLDDFSRIGSKVPHLADVKPFGRHVMTDVDHIGGVPVMMKALLDAGLLNGDCLTVTGATVAQNLAAIAPPDPDGKVLRALSDPLHPTGGITILRGSLAPEGAVVKSAGFDSDVFEGTARVFDGERAALDALEDGTITKGDAVVIRYEGPKGGPGMREMLAITGAIKGAGLGKDVLLLTDGRFSGGTTGLCVGHIAPEAVDAGPIAFLRDGDRIRLDVANRVLDVLVDPAEFDSRRTAFTPPPPRYKTGVLAKYVKLVGSAAIGAVCG.

Residues 1-25 (MPTTDSARAADIKQPDIKPRSRDVT) are disordered. A compositionally biased stretch (basic and acidic residues) spans 8 to 25 (RAADIKQPDIKPRSRDVT). Residue Cys64 coordinates [2Fe-2S] cluster. Asp96 is a binding site for Mg(2+). Cys137 contacts [2Fe-2S] cluster. Mg(2+)-binding residues include Asp138 and Lys139. An N6-carboxylysine modification is found at Lys139. [2Fe-2S] cluster is bound at residue Cys214. A Mg(2+)-binding site is contributed by Glu465. Ser491 acts as the Proton acceptor in catalysis.

This sequence belongs to the IlvD/Edd family. As to quaternary structure, homodimer. The cofactor is [2Fe-2S] cluster. Mg(2+) serves as cofactor.

It carries out the reaction (2R)-2,3-dihydroxy-3-methylbutanoate = 3-methyl-2-oxobutanoate + H2O. The enzyme catalyses (2R,3R)-2,3-dihydroxy-3-methylpentanoate = (S)-3-methyl-2-oxopentanoate + H2O. It participates in amino-acid biosynthesis; L-isoleucine biosynthesis; L-isoleucine from 2-oxobutanoate: step 3/4. The protein operates within amino-acid biosynthesis; L-valine biosynthesis; L-valine from pyruvate: step 3/4. Its function is as follows. Functions in the biosynthesis of branched-chain amino acids. Catalyzes the dehydration of (2R,3R)-2,3-dihydroxy-3-methylpentanoate (2,3-dihydroxy-3-methylvalerate) into 2-oxo-3-methylpentanoate (2-oxo-3-methylvalerate) and of (2R)-2,3-dihydroxy-3-methylbutanoate (2,3-dihydroxyisovalerate) into 2-oxo-3-methylbutanoate (2-oxoisovalerate), the penultimate precursor to L-isoleucine and L-valine, respectively. This chain is Dihydroxy-acid dehydratase, found in Mycobacterium avium (strain 104).